The sequence spans 178 residues: Cytochrome b6-f complex subunit 4 (178 aa).

A run of 3 helical transmembrane segments spans residues 36-56 (LSYI…GLAV), 95-115 (LLGV…PFLE), and 131-151 (TVSL…ALPI).

It belongs to the cytochrome b family. PetD subfamily. The 4 large subunits of the cytochrome b6-f complex are cytochrome b6, subunit IV (17 kDa polypeptide, petD), cytochrome f and the Rieske protein, while the 4 small subunits are petG, petL, petM and petN. The complex functions as a dimer.

It localises to the plastid. The protein localises to the chloroplast thylakoid membrane. Functionally, component of the cytochrome b6-f complex, which mediates electron transfer between photosystem II (PSII) and photosystem I (PSI), cyclic electron flow around PSI, and state transitions. The sequence is that of Cytochrome b6-f complex subunit 4 from Picea abies (Norway spruce).